We begin with the raw amino-acid sequence, 339 residues long: Phosphate acyltransferase (339 aa).

It belongs to the PlsX family. In terms of assembly, homodimer. Probably interacts with PlsY.

The protein localises to the cytoplasm. It catalyses the reaction a fatty acyl-[ACP] + phosphate = an acyl phosphate + holo-[ACP]. It functions in the pathway lipid metabolism; phospholipid metabolism. In terms of biological role, catalyzes the reversible formation of acyl-phosphate (acyl-PO(4)) from acyl-[acyl-carrier-protein] (acyl-ACP). This enzyme utilizes acyl-ACP as fatty acyl donor, but not acyl-CoA. This chain is Phosphate acyltransferase, found in Helicobacter acinonychis (strain Sheeba).